The sequence spans 91 residues: Islet amyloid polypeptide (91 aa).

The first 22 residues, 1-22 (MCLLQLPVVLLLLSAALNTLKA), serve as a signal peptide directing secretion. Residues 23–34 (TPIASDTDHRVD) constitute a propeptide that is removed on maturation. A disulfide bridge links cysteine 38 with cysteine 43. Tyrosine 73 bears the Tyrosine amide mark. Positions 77 to 91 (NAEVVDVELLHYLPL) are excised as a propeptide.

This sequence belongs to the calcitonin family. Can form homodimers. Interacts with IDE and INS. Interaction with INS inhibits homodimerization and fibril formation.

The protein localises to the secreted. Its function is as follows. Amylin/IAPP is a glucoregulatory peptide hormone that plays an important role in the regulation of energy homeostasis. Selectively inhibits insulin-stimulated glucose utilization and glycogen deposition in muscle, while not affecting adipocyte glucose metabolism. IAPP function is mediated by the CALCR-RAMPs (AMYRs) receptor complexes. Amylin can also bind CALCR receptor in the absence of RAMPs, although it is more selective for AMYRs. In Octodon degus (Degu), this protein is Islet amyloid polypeptide (IAPP).